The sequence spans 559 residues: MEASSPLDPVGRLVAFCRGGVHLAVLLLFLSPSTLGQCPAPPLFPYAKPINPTDESTFPVGTSLKYECRPGYIKRQFSITCEVNSVWTSPQDVCIRKQCETPLDPQNGIVHVNTDIRFGSSITYTCNEGYRLIGSSSAMCIISDQSVAWDAEAPICESIPCEIPPSIPNGDFFSPNREDFHYGMVVTYQCNTDARGKKLFNLVGEPSIHCTSIDGQVGVWSGPPPQCIELNKCTPPHVENAVIVSKNKSLFSLRDMVEFRCQDGFMMKGDSSVYCRSLNRWEPQLPSCFKVKSCGAFLGELPNGHVFVPQNLQLGAKVTFVCNTGYQLKGNSSSHCVLDGVESIWNSSVPVCEQVICKLPQDMSGFQKGLQMKKDYYYGDNVALECEDGYTLEGSSQSQCQSDASWDPPLPKCVSQVICKLPQDMSGFQKGLQMKKDYYYGDNVALECEDGYTLEGSSQSQCQSDASWDPPLPKCVSRSNSGLIAGIFIGIIVLILFIIFSYWMIMKFKKRNSTNEKCKEVGIYLNSKEDSCVQPQSLLTSQENNSTSSPARNSLTQEV.

A signal peptide spans 1 to 35 (MEASSPLDPVGRLVAFCRGGVHLAVLLLFLSPSTL). 7 Sushi domains span residues 36 to 96 (GQCP…VCIR), 97 to 158 (KQCE…ICES), 159 to 229 (IPCE…QCIE), 231 to 290 (NKCT…SCFK), 292 to 354 (KSCG…VCEQ), 355 to 415 (VICK…KCVS), and 417 to 477 (VICK…KCVS). Residues 36 to 482 (GQCPAPPLFP…PKCVSRSNSG (447 aa)) are Extracellular-facing. 14 cysteine pairs are disulfide-bonded: Cys-38-Cys-81, Cys-68-Cys-94, Cys-99-Cys-140, Cys-126-Cys-156, Cys-161-Cys-210, Cys-190-Cys-227, Cys-233-Cys-275, Cys-261-Cys-288, Cys-294-Cys-336, Cys-322-Cys-352, Cys-357-Cys-400, Cys-386-Cys-413, Cys-419-Cys-462, and Cys-448-Cys-475. An O-linked (GalNAc...) threonine glycan is attached at Thr-53. An N-linked (GlcNAc...) asparagine glycan is attached at Asn-331. The helical transmembrane segment at 483 to 503 (LIAGIFIGIIVLILFIIFSYW) threads the bilayer. At 504-559 (MIMKFKKRNSTNEKCKEVGIYLNSKEDSCVQPQSLLTSQENNSTSSPARNSLTQEV) the chain is on the cytoplasmic side. 3 positions are modified to phosphoserine: Ser-527, Ser-531, and Ser-537. The segment at 535-559 (PQSLLTSQENNSTSSPARNSLTQEV) is disordered. Position 540 is a phosphothreonine (Thr-540). The residue at position 554 (Ser-554) is a Phosphoserine.

This sequence belongs to the receptors of complement activation (RCA) family. Interacts with C3b.

It is found in the membrane. Its function is as follows. Acts as a cofactor for complement factor I, a serine protease which protects autologous cells against complement-mediated injury by cleaving C3b and C4b deposited on host tissue. Also acts as a decay-accelerating factor, preventing the formation of C4b2a and C3bBb, the amplification convertases of the complement cascade. Seems to act as a costimulatory factor for T-cells. May play a crucial role in early embryonic development by maintaining fetomaternal tolerance. This Rattus norvegicus (Rat) protein is Complement component receptor 1-like protein (Cr1l).